Reading from the N-terminus, the 428-residue chain is 3-phosphoshikimate 1-carboxyvinyltransferase (428 aa).

Lys-20, Ser-21, and Arg-25 together coordinate 3-phosphoshikimate. Position 20 (Lys-20) interacts with phosphoenolpyruvate. The phosphoenolpyruvate site is built by Gly-93 and Arg-122. Ser-167, Gln-169, Asp-317, and Lys-344 together coordinate 3-phosphoshikimate. Position 169 (Gln-169) interacts with phosphoenolpyruvate. Asp-317 serves as the catalytic Proton acceptor. 2 residues coordinate phosphoenolpyruvate: Arg-348 and Arg-390.

Belongs to the EPSP synthase family. Monomer.

It localises to the cytoplasm. The enzyme catalyses 3-phosphoshikimate + phosphoenolpyruvate = 5-O-(1-carboxyvinyl)-3-phosphoshikimate + phosphate. It participates in metabolic intermediate biosynthesis; chorismate biosynthesis; chorismate from D-erythrose 4-phosphate and phosphoenolpyruvate: step 6/7. Catalyzes the transfer of the enolpyruvyl moiety of phosphoenolpyruvate (PEP) to the 5-hydroxyl of shikimate-3-phosphate (S3P) to produce enolpyruvyl shikimate-3-phosphate and inorganic phosphate. The polypeptide is 3-phosphoshikimate 1-carboxyvinyltransferase (Leptospira biflexa serovar Patoc (strain Patoc 1 / ATCC 23582 / Paris)).